We begin with the raw amino-acid sequence, 42 residues long: Photosystem I reaction center subunit IX (42 aa).

The chain crosses the membrane as a helical span at residues 7–27 (YLSVAPVLSTLWFGALAGLLI).

This sequence belongs to the PsaJ family.

Its subcellular location is the plastid. The protein localises to the chloroplast thylakoid membrane. May help in the organization of the PsaE and PsaF subunits. This Guizotia abyssinica (Niger) protein is Photosystem I reaction center subunit IX.